A 338-amino-acid chain; its full sequence is Ketol-acid reductoisomerase (NADP(+)) (338 aa).

Residues 1–181 (MQVYYDKDCD…GGGRSGIIET (181 aa)) enclose the KARI N-terminal Rossmann domain. NADP(+) is bound by residues 24-27 (YGSQ), Arg-47, Ser-50, Ser-52, and 82-85 (DEFQ). Residue His-107 is part of the active site. Residue Gly-133 coordinates NADP(+). Positions 182–327 (TFKDETETDL…GKLRAMMPWI (146 aa)) constitute a KARI C-terminal knotted domain. 4 residues coordinate Mg(2+): Asp-190, Glu-194, Glu-226, and Glu-230. Ser-251 provides a ligand contact to substrate.

Belongs to the ketol-acid reductoisomerase family. Mg(2+) is required as a cofactor.

It catalyses the reaction (2R)-2,3-dihydroxy-3-methylbutanoate + NADP(+) = (2S)-2-acetolactate + NADPH + H(+). The catalysed reaction is (2R,3R)-2,3-dihydroxy-3-methylpentanoate + NADP(+) = (S)-2-ethyl-2-hydroxy-3-oxobutanoate + NADPH + H(+). It participates in amino-acid biosynthesis; L-isoleucine biosynthesis; L-isoleucine from 2-oxobutanoate: step 2/4. The protein operates within amino-acid biosynthesis; L-valine biosynthesis; L-valine from pyruvate: step 2/4. Its function is as follows. Involved in the biosynthesis of branched-chain amino acids (BCAA). Catalyzes an alkyl-migration followed by a ketol-acid reduction of (S)-2-acetolactate (S2AL) to yield (R)-2,3-dihydroxy-isovalerate. In the isomerase reaction, S2AL is rearranged via a Mg-dependent methyl migration to produce 3-hydroxy-3-methyl-2-ketobutyrate (HMKB). In the reductase reaction, this 2-ketoacid undergoes a metal-dependent reduction by NADPH to yield (R)-2,3-dihydroxy-isovalerate. The chain is Ketol-acid reductoisomerase (NADP(+)) from Saccharophagus degradans (strain 2-40 / ATCC 43961 / DSM 17024).